The chain runs to 477 residues: UTP--glucose-1-phosphate uridylyltransferase (477 aa).

Ala-2 bears the N-acetylalanine mark. Residues 92–95, Lys-106, Gln-169, and Gly-198 contribute to the UTP site; that span reads LNGG. Position 94–95 (94–95) interacts with substrate; that stretch reads GG. Residues His-199 and 227 to 229 each bind substrate; that span reads NSD. UTP contacts are provided by Asp-229 and Lys-367.

It belongs to the UDPGP type 1 family. As to quaternary structure, monomer. Requires Mg(2+) as cofactor.

It localises to the cytoplasm. The enzyme catalyses alpha-D-glucose 1-phosphate + UTP + H(+) = UDP-alpha-D-glucose + diphosphate. With respect to regulation, inhibition by uncomplexed, free UTP. Functionally, plays a central role as a glucosyl donor in cellular metabolic pathways. The sequence is that of UTP--glucose-1-phosphate uridylyltransferase from Solanum tuberosum (Potato).